The following is a 542-amino-acid chain: Probable cysteine proteinase 361L (542 aa).

Catalysis depends on residues Cys-172, His-382, and Asn-414. The chain crosses the membrane as a helical span at residues 520–540 (TNNWYIYALIIIFILIIFFVL).

This sequence belongs to the peptidase C1 family.

Its subcellular location is the membrane. Its function is as follows. Probable cysteine protease. The protein is Probable cysteine proteinase 361L of Acheta domesticus (House cricket).